Reading from the N-terminus, the 92-residue chain is Non-specific lipid-transfer protein 2 (92 aa).

Cystine bridges form between Cys-4–Cys-52, Cys-14–Cys-28, Cys-29–Cys-74, and Cys-50–Cys-88.

The protein belongs to the plant LTP family. In terms of tissue distribution, expressed in seeds and, at very low levels, in pulp of fruit (at protein level).

Its function is as follows. Plant non-specific lipid-transfer proteins transfer phospholipids as well as galactolipids across membranes. May play a role in wax or cutin deposition in the cell walls of expanding epidermal cells and certain secretory tissues. The chain is Non-specific lipid-transfer protein 2 from Actinidia deliciosa (Kiwi).